Here is a 165-residue protein sequence, read N- to C-terminus: 3-isopropylmalate dehydratase small subunit (165 aa).

This sequence belongs to the LeuD family. LeuD type 2 subfamily. In terms of assembly, heterodimer of LeuC and LeuD.

The enzyme catalyses (2R,3S)-3-isopropylmalate = (2S)-2-isopropylmalate. It participates in amino-acid biosynthesis; L-leucine biosynthesis; L-leucine from 3-methyl-2-oxobutanoate: step 2/4. Its function is as follows. Catalyzes the isomerization between 2-isopropylmalate and 3-isopropylmalate, via the formation of 2-isopropylmaleate. This chain is 3-isopropylmalate dehydratase small subunit, found in Helicobacter hepaticus (strain ATCC 51449 / 3B1).